The primary structure comprises 237 residues: EFPTPLTTGLQVESIVFPSSVKPPGSTNSLFLGGAGVRGMEIQGNFVKFTGIGVYLEDKAIPLLAAKRKGKTVAELLDSVEFFRDIVTGPFEKFTQVTMILPLTGKQYSEKVSEMCVGVWKALGTYTDADGTTIEKFLEVFKDENFLPGSSILFTTSPLGSLTISFSKDGTIPEAANVVLENEKLAQAVIESVIGKNGVSPATKQSLASRLSDLMKQFDEESNGSVEVEDLSKNSCK.

Substrate is bound by residues threonine 50 and serine 192.

Belongs to the chalcone isomerase family.

It carries out the reaction a chalcone = a flavanone.. It functions in the pathway secondary metabolite biosynthesis; flavonoid biosynthesis. Functionally, catalyzes the intramolecular cyclization of bicyclic chalcones into tricyclic (S)-flavanones. Responsible for the isomerization of 4,2',4',6'-tetrahydroxychalcone (also termed chalcone) into naringenin. In Callistephus chinensis (China aster), this protein is Chalcone--flavanone isomerase (CHI).